An 897-amino-acid chain; its full sequence is Pre-mRNA-splicing factor CWC22 homolog (897 aa).

A compositionally biased stretch (polar residues) spans 1–10; it reads MSSSRSQSPE. The tract at residues 1-155 is disordered; it reads MSSSRSQSPE…EKKKKEPLDI (155 aa). 3 stretches are compositionally biased toward basic and acidic residues: residues 36 to 54, 93 to 107, and 131 to 155; these read SSEKSASRSQSPRESREVS, RSKETRESESPEKSP, and RSSERKQSEEPAPLPEKKKKEPLDI. The 189-residue stretch at 194–382 folds into the MIF4G domain; sequence KKKIHGLVNR…ETAMQIRKDK (189 aa). Residues 444 to 472 are disordered; it reads NADISDEDGGDELDDEEEGSDVEEAPKKT. The segment covering 447–466 has biased composition (acidic residues); the sequence is ISDEDGGDELDDEEEGSDVE. Residues 485–601 form the MI domain; the sequence is AFRREVYLTM…DWKILADMKM (117 aa). Composition is skewed to low complexity over residues 689–710 and 720–730; these read LDQLKAESSSDSSSSSDSSDSS and DSSSDSSSSSE. A disordered region spans residues 689–897; the sequence is LDQLKAESSS…VESDDRRRRR (209 aa). Over residues 743–897 the composition is skewed to basic and acidic residues; it reads NSEESSKKKE…VESDDRRRRR (155 aa).

This sequence belongs to the CWC22 family. As to expression, expressed in germ cells, oocytes, and sperm cells.

It localises to the nucleus. Its subcellular location is the nucleus speckle. In terms of biological role, required for pre-mRNA splicing and for exon-junction complex (EJC) assembly. Hinders EIF4A3 from non-specifically binding RNA and escorts it to the splicing machinery to promote EJC assembly on mature mRNAs. Through its role in EJC assembly, required for nonsense-mediated mRNA decay. Plays a role in the nuclear retention of unspliced mRNAs. Plays a role in sex determination. Required for early embryogenesis and tissue differentiation. The polypeptide is Pre-mRNA-splicing factor CWC22 homolog (Caenorhabditis elegans).